A 296-amino-acid chain; its full sequence is Nucleotide-binding protein SSA_0810 (296 aa).

Residue 13 to 20 (GMSGAGKT) participates in ATP binding. 63–66 (DMRS) lines the GTP pocket. The tract at residues 277–296 (WPVNSSHRDKNRRKETVNRS) is disordered. A compositionally biased stretch (basic and acidic residues) spans 282–296 (SHRDKNRRKETVNRS).

Belongs to the RapZ-like family.

Functionally, displays ATPase and GTPase activities. The protein is Nucleotide-binding protein SSA_0810 of Streptococcus sanguinis (strain SK36).